Here is a 474-residue protein sequence, read N- to C-terminus: Cytochrome c-552 (474 aa).

An N-terminal signal peptide occupies residues 1-29 (MSIKHWMASSVSVTALVMTALLNITAVSA). His91 provides a ligand contact to heme c. The heme site is built by Cys119, Cys122, and Lys123. 6 residues coordinate heme c: Cys157, Cys160, His161, Cys206, Cys209, and His210. Positions 212, 213, 258, and 260 each coordinate Ca(2+). Tyr213 contacts substrate. His261 contributes to the substrate binding site. Positions 272, 279, 282, 283, 298, 311, 314, 315, and 390 each coordinate heme c.

It belongs to the cytochrome c-552 family. Ca(2+) is required as a cofactor. It depends on heme c as a cofactor.

It localises to the periplasm. It catalyses the reaction 6 Fe(III)-[cytochrome c] + NH4(+) + 2 H2O = 6 Fe(II)-[cytochrome c] + nitrite + 8 H(+). Its pathway is nitrogen metabolism; nitrate reduction (assimilation). In terms of biological role, catalyzes the reduction of nitrite to ammonia, consuming six electrons in the process. The protein is Cytochrome c-552 of Vibrio vulnificus (strain CMCP6).